A 267-amino-acid polypeptide reads, in one-letter code: Integral membrane protein 2C (267 aa).

Residue threonine 37 is modified to Phosphothreonine. Residues 55–75 (VGGVCYLSMGMVVLLMGLVFA) traverse the membrane as a helical; Signal-anchor for type II membrane protein segment. In terms of domain architecture, BRICHOS spans 136–230 (FGGGDPADII…LCNGKDTYRL (95 aa)). Residues cysteine 163 and cysteine 222 are joined by a disulfide bond. N-linked (GlcNAc...) asparagine glycosylation occurs at asparagine 169.

It belongs to the ITM2 family. In terms of assembly, interacts with BACE1. Interacts with APP. Interacts with STMN2. Type I membrane-bound, as well as soluble, furin has a pre-eminent role in ITM2C proteolytic processing. PCSK7 and PCSK5 may also be involved although to a lesser extent. The soluble form of PCSK7 is incapable of processing ITM2C. Fails to undergo shedding by ADAM10 and intramembrane cleavage by SPPL2B.

It is found in the lysosome membrane. It localises to the cell membrane. Negative regulator of amyloid-beta peptide production. May inhibit the processing of APP by blocking its access to alpha- and beta-secretase. Binding to the beta-secretase-cleaved APP C-terminal fragment is negligible, suggesting that ITM2C is a poor gamma-secretase cleavage inhibitor. May play a role in TNF-induced cell death and neuronal differentiation. The chain is Integral membrane protein 2C (ITM2C) from Pongo abelii (Sumatran orangutan).